A 484-amino-acid polypeptide reads, in one-letter code: MIHGQTSTPGLSVAPQIMRASWVESRKGQANVSQMHYARQGVVTEEMAHVAKRENLPESLVMEEVARGRMIIPANINHTNLEPMAIGIASKCKVNANIGASPNASDAAEEVKKLKLAVKYGADTVMDLSTGGVNLDEVRTAIIGASPVPIGTVPVYQALESVHGSIEKLDEDDFLHIIEKHCQQGVDYQTIHAGLLIEHLPKVKGRITGIVSRGGGILAQWMLYHHRQNPLYTRFDDICEIFKRYDCTFSLGDSLRPGCQHDASDAAQLAELHTLGELTRRAWKHDVQVMVEGPGHVPLDQIEFNVKKQMEECSEAPFYVLGPLVTDIAPGYDHITSAIGAAMAGWHGTAMLCYVTPKEHLGLPNADDVREGLIAYKIAAHAADIARHRPGARDRDDELSRARYNFDWNKQFELSLDPERAKEYHDETLPADIYKQAEFCSMCGPKHCPMQTKITDEDLEGLEKVLEANTGAAELTPVKLDKAD.

Residues Asn97, Met126, Tyr156, His192, 212-214, 253-256, and Glu292 contribute to the substrate site; these read SRG and DSLR. His296 is a binding site for Zn(2+). Tyr319 serves as a coordination point for substrate. His360 serves as a coordination point for Zn(2+). Cys440, Cys443, and Cys448 together coordinate [4Fe-4S] cluster.

The protein belongs to the ThiC family. Requires [4Fe-4S] cluster as cofactor.

The enzyme catalyses 5-amino-1-(5-phospho-beta-D-ribosyl)imidazole + S-adenosyl-L-methionine = 4-amino-2-methyl-5-(phosphooxymethyl)pyrimidine + CO + 5'-deoxyadenosine + formate + L-methionine + 3 H(+). The protein operates within cofactor biosynthesis; thiamine diphosphate biosynthesis. Functionally, catalyzes the synthesis of the hydroxymethylpyrimidine phosphate (HMP-P) moiety of thiamine from aminoimidazole ribotide (AIR) in a radical S-adenosyl-L-methionine (SAM)-dependent reaction. The polypeptide is Phosphomethylpyrimidine synthase (Synechococcus sp. (strain CC9605)).